The chain runs to 323 residues: Elongation factor P--(R)-beta-lysine ligase (323 aa).

Substrate is bound at residue 74–76 (SPE). ATP is bound by residues 98-100 (RNE) and Asn107. Tyr116 lines the substrate pocket. ATP is bound at residue 242–243 (EL). Glu249 contacts substrate. Position 298 (Gly298) interacts with ATP.

Belongs to the class-II aminoacyl-tRNA synthetase family. EpmA subfamily. As to quaternary structure, homodimer.

It catalyses the reaction D-beta-lysine + L-lysyl-[protein] + ATP = N(6)-((3R)-3,6-diaminohexanoyl)-L-lysyl-[protein] + AMP + diphosphate + H(+). With EpmB is involved in the beta-lysylation step of the post-translational modification of translation elongation factor P (EF-P). Catalyzes the ATP-dependent activation of (R)-beta-lysine produced by EpmB, forming a lysyl-adenylate, from which the beta-lysyl moiety is then transferred to the epsilon-amino group of a conserved specific lysine residue in EF-P. In Vibrio atlanticus (strain LGP32) (Vibrio splendidus (strain Mel32)), this protein is Elongation factor P--(R)-beta-lysine ligase.